We begin with the raw amino-acid sequence, 1141 residues long: Membrane-associated protein gex-3 (1141 aa).

This sequence belongs to the HEM-1/HEM-2 family. Interacts with aco-1, gei-13 and gex-2. Interacts with gex-3. As to expression, expressed in neurons.

Its subcellular location is the cytoplasm. Its function is as follows. Rac effector required for tissue morphogenesis, cell migrations and egg laying. May play a role in egg laying and in yolk protein clatherin-mediated endocytosis by oocytes during oogenesis. Plays a role in the formation of gap junctions between EA and EP endodermal precursor cells in embryos. This Caenorhabditis elegans protein is Membrane-associated protein gex-3.